Consider the following 343-residue polypeptide: Nod factor export ATP-binding protein I (343 aa).

A compositionally biased stretch (polar residues) spans 1-14 (MQLLTRANVSSSPS). The segment at 1–38 (MQLLTRANVSSSPSRRPESNALKQKCHGHSNADNSLSR) is disordered. The 231-residue stretch at 45 to 275 (IELTNVSKSY…QIGCDVIEIY (231 aa)) folds into the ABC transporter domain. 77 to 84 (GPNGAGKS) serves as a coordination point for ATP.

The protein belongs to the ABC transporter superfamily. Lipooligosaccharide exporter (TC 3.A.1.102) family. In terms of assembly, the complex is composed of two ATP-binding proteins (NodI) and two transmembrane proteins (NodJ).

It localises to the cell inner membrane. Functionally, part of the ABC transporter complex NodIJ involved in the export of the nodulation factors (Nod factors), the bacterial signal molecules that induce symbiosis and subsequent nodulation induction. Nod factors are LCO (lipo-chitin oligosaccharide), a modified beta-1,4-linked N-acetylglucosamine oligosaccharide. This subunit is responsible for energy coupling to the transport system. This is Nod factor export ATP-binding protein I from Sinorhizobium fredii (strain NBRC 101917 / NGR234).